The sequence spans 173 residues: MQAPPTREGPRINDMIDEPTVLLIDAEGEKRGVIPTDEAIRMAEEAGLDLVEVSPNAKPPVCKLLDYGKFKYQAQKKANEARKKQKTVEVKEIKMRPNIDTHDYEVKMRAMLRFFEEGDKVKVTLRFRGREMAHQELGMVLLNKVKEEVEPIAKVELYPRLEGRQMIMVLAPK.

The protein belongs to the IF-3 family. Monomer.

It is found in the cytoplasm. IF-3 binds to the 30S ribosomal subunit and shifts the equilibrium between 70S ribosomes and their 50S and 30S subunits in favor of the free subunits, thus enhancing the availability of 30S subunits on which protein synthesis initiation begins. The sequence is that of Translation initiation factor IF-3 from Parvibaculum lavamentivorans (strain DS-1 / DSM 13023 / NCIMB 13966).